The sequence spans 325 residues: Elongation factor P--(R)-beta-lysine ligase (325 aa).

Substrate is bound at residue 76–78 (SPE). ATP is bound by residues 100–102 (RNE) and asparagine 109. Tyrosine 118 serves as a coordination point for substrate. 244-245 (EL) lines the ATP pocket. Glutamate 251 contributes to the substrate binding site. Glycine 300 contributes to the ATP binding site.

It belongs to the class-II aminoacyl-tRNA synthetase family. EpmA subfamily. In terms of assembly, homodimer.

It carries out the reaction D-beta-lysine + L-lysyl-[protein] + ATP = N(6)-((3R)-3,6-diaminohexanoyl)-L-lysyl-[protein] + AMP + diphosphate + H(+). With EpmB is involved in the beta-lysylation step of the post-translational modification of translation elongation factor P (EF-P) on 'Lys-34'. Catalyzes the ATP-dependent activation of (R)-beta-lysine produced by EpmB, forming a lysyl-adenylate, from which the beta-lysyl moiety is then transferred to the epsilon-amino group of EF-P 'Lys-34'. In Escherichia fergusonii (strain ATCC 35469 / DSM 13698 / CCUG 18766 / IAM 14443 / JCM 21226 / LMG 7866 / NBRC 102419 / NCTC 12128 / CDC 0568-73), this protein is Elongation factor P--(R)-beta-lysine ligase.